The primary structure comprises 265 residues: Tryptophan 2,3-dioxygenase (265 aa).

Substrate is bound by residues 38–42 and Arg104; that span reads FIVVH. His223 lines the heme pocket. Thr237 provides a ligand contact to substrate.

The protein belongs to the tryptophan 2,3-dioxygenase family. Homotetramer. Heme is required as a cofactor.

It carries out the reaction L-tryptophan + O2 = N-formyl-L-kynurenine. It functions in the pathway amino-acid degradation; L-tryptophan degradation via kynurenine pathway; L-kynurenine from L-tryptophan: step 1/2. Its function is as follows. Heme-dependent dioxygenase that catalyzes the oxidative cleavage of the L-tryptophan (L-Trp) pyrrole ring and converts L-tryptophan to N-formyl-L-kynurenine. Catalyzes the oxidative cleavage of the indole moiety. The polypeptide is Tryptophan 2,3-dioxygenase (Anaeromyxobacter dehalogenans (strain 2CP-C)).